Here is a 269-residue protein sequence, read N- to C-terminus: Protein shisa-1 (269 aa).

Residues 1–18 (MEFIVLLTVCALLGLSCG) form the signal peptide. Topologically, residues 19–98 (QHGEYCHGWT…LPPTVPTYFP (80 aa)) are extracellular. A helical transmembrane segment spans residues 99-119 (FLLVGSIFVSFVILGSLVGLC). The Cytoplasmic portion of the chain corresponds to 120-269 (CCKCLKPEDD…TVCSGSPSKC (150 aa)). A disordered region spans residues 129 to 167 (DTQVSGPAPIQSRLLDQDPSTDTSRHSSSSSASMPRPPI). Residues 146 to 162 (DPSTDTSRHSSSSSASM) are compositionally biased toward low complexity.

Belongs to the shisa family. Interacts with immature forms of fzd8 and fgfr.

Its subcellular location is the endoplasmic reticulum. It is found in the membrane. Required for head formation during gastrulation. Functions as an inhibitor for the caudalizing signals wnt and fgf, does not inhibit bmp, activin and nodal signaling in head formation process. Induces retention of fzd8 in the endoplasmic reticulum and inhibits trafficking of fzd8 to the cell surface. The sequence is that of Protein shisa-1 (shisa1) from Xenopus laevis (African clawed frog).